A 372-amino-acid chain; its full sequence is O-methyltransferase bfoE (372 aa).

Trp186 serves as a coordination point for S-adenosyl-L-methionine. The active-site Proton acceptor is His285.

Belongs to the class I-like SAM-binding methyltransferase superfamily. Cation-independent O-methyltransferase family.

The protein operates within secondary metabolite biosynthesis. Cytochrome P450 monooxygenase; part of the gene cluster that mediates the biosynthesis of bifonsecin B, a dimeric gamma-naphthopyrone. The first step in the biosynthesis of bifonsecin B is the production of gamma-naphthopyrone precursor YWA1 by the non-reducing polyketide synthase albA, via condensation of one acetyl-CoA starter unit with 6 malonyl-CoA units. YWA1 is then methylated by bfoE at position C-6 to yield foncesin which is further methylated at position C-8 by bfoD to produce fonsecin B. A key enzyme in the biosynthetic pathway is the cytochrome P450 monooxygenase bfoB which catalyzes the oxidative dimerization of fonsecin B to bifonsecin B. Bfob also catalyzes the oxidative dimerization of rubrofusarin B into nigerone. The stereoselectivity of bfoB is influenced by the two natural monomeric substrates; homodimerization of fonsecin B yields a stereochemically pure biaryl, M-foncerine B, while rubrofusarin B yields a mixture of enantiomers M- and P-nigerone. The protein is O-methyltransferase bfoE of Aspergillus brasiliensis (strain CBS 101740 / IMI 381727 / IBT 21946).